Consider the following 585-residue polypeptide: Mitochondrial translation ATP-dependent RNA helicase mrh5 (585 aa).

Residues 87–117 (PKFHELPLNQNILDGLSTNFAEYKNSTPLQQ) carry the Q motif motif. Positions 121 to 351 (NALMKSGVSF…SRYITDQLGI (231 aa)) constitute a Helicase ATP-binding domain. Residue 134–141 (GWNGSGKS) participates in ATP binding. Residues 261-264 (DESD) carry the DEAD box motif. Positions 390-584 (NLPYEFVRFN…PKSYEFDDEH (195 aa)) constitute a Helicase C-terminal domain.

It belongs to the DEAD box helicase family. In terms of assembly, component of the MRH5C complex, composed of mrh5, ppr4, mtf2, and sls1. Proteins mtf2 and sls1 form a subcomplex that serves as a scaffold to bring mrh5 and ppr4 together. The MRH5C complex associates with the small subunit of the mitochondrial ribosome.

It is found in the mitochondrion. It catalyses the reaction ATP + H2O = ADP + phosphate + H(+). Translation activation factor that as part of the MRH5C complex specifically recruits cox1 mRNA to the mitochondrial ribosome for translation initiation. This Schizosaccharomyces pombe (strain 972 / ATCC 24843) (Fission yeast) protein is Mitochondrial translation ATP-dependent RNA helicase mrh5.